Here is a 107-residue protein sequence, read N- to C-terminus: Thioredoxin (107 aa).

The region spanning 2-107 (SATPQVSDAS…TLASTLEKYL (106 aa)) is the Thioredoxin domain. A disulfide bond links C32 and C35.

This sequence belongs to the thioredoxin family.

Functionally, component of the thioredoxin-thioredoxin reductase system. Participates in various redox reactions through the reversible oxidation of its active center dithiol to a disulfide and catalyzes dithiol-disulfide exchange reactions. The chain is Thioredoxin (trxA) from Synechocystis sp. (strain ATCC 27184 / PCC 6803 / Kazusa).